The sequence spans 315 residues: Calumenin (315 aa).

Positions 1–19 are cleaved as a signal peptide; the sequence is MDLRQFLMCLSLCTAFALS. Ser44 carries the phosphoserine modification. The residue at position 47 (Tyr47) is a Phosphotyrosine. Thr65 is subject to Phosphothreonine. EF-hand domains follow at residues 68-103, 104-139, 151-186, 188-223, 229-264, and 265-300; these read ESKE…AQKR, WIYE…YVLD, QMMV…EEYD, MKDI…HDGN, WVKT…SDYD, and HAEA…FVGS. Phosphoserine; by FAM20C is present on Ser69. Residues Asp81, Asp83, Asp85, Glu92, Asp117, Asn119, Asp121, and Glu128 each coordinate Ca(2+). Residue Asn131 is glycosylated (N-linked (GlcNAc...) (complex) asparagine). Asp164 is a Ca(2+) binding site. An N6-acetyllysine modification is found at Lys165. 12 residues coordinate Ca(2+): Asp166, Asp168, Glu175, Asp201, Asn203, Asp205, Glu212, Asp242, Asn244, Asp246, Lys248, and Glu253. A Phosphothreonine modification is found at Thr254. Phosphoserine occurs at positions 261 and 277. Asp278, Asn280, Asp282, Lys284, and Glu289 together coordinate Ca(2+). Positions 312 to 315 match the Prevents secretion from ER motif; the sequence is HDEF.

The protein belongs to the CREC family. As to quaternary structure, interacts with GGCX. In terms of tissue distribution, ubiquitously expressed. Expressed at high levels in heart, placenta and skeletal muscle, at lower levels in lung, kidney and pancreas and at very low levels in brain and liver.

The protein resides in the endoplasmic reticulum membrane. Its subcellular location is the golgi apparatus. It localises to the secreted. It is found in the melanosome. The protein localises to the sarcoplasmic reticulum lumen. Its function is as follows. Involved in regulation of vitamin K-dependent carboxylation of multiple N-terminal glutamate residues. Seems to inhibit gamma-carboxylase GGCX. Binds 7 calcium ions with a low affinity. The chain is Calumenin (CALU) from Homo sapiens (Human).